A 721-amino-acid chain; its full sequence is DNA ligase (721 aa).

The span at 1-19 (MTAKKQGAQASASAPSGDS) shows a compositional bias: low complexity. The segment at 1-23 (MTAKKQGAQASASAPSGDSPAER) is disordered. Residues 48–52 (DADYD), 97–98 (SL), and glutamate 162 contribute to the NAD(+) site. The active-site N6-AMP-lysine intermediate is the lysine 164. NAD(+) is bound by residues arginine 185, glutamate 221, lysine 338, and lysine 362. Zn(2+) is bound by residues cysteine 456, cysteine 459, cysteine 474, and cysteine 480. Residues 639–721 (RAPLPLAGKT…LKLLAEVGAA (83 aa)) enclose the BRCT domain.

The protein belongs to the NAD-dependent DNA ligase family. LigA subfamily. The cofactor is Mg(2+). Mn(2+) serves as cofactor.

The enzyme catalyses NAD(+) + (deoxyribonucleotide)n-3'-hydroxyl + 5'-phospho-(deoxyribonucleotide)m = (deoxyribonucleotide)n+m + AMP + beta-nicotinamide D-nucleotide.. In terms of biological role, DNA ligase that catalyzes the formation of phosphodiester linkages between 5'-phosphoryl and 3'-hydroxyl groups in double-stranded DNA using NAD as a coenzyme and as the energy source for the reaction. It is essential for DNA replication and repair of damaged DNA. The sequence is that of DNA ligase from Cupriavidus metallidurans (strain ATCC 43123 / DSM 2839 / NBRC 102507 / CH34) (Ralstonia metallidurans).